We begin with the raw amino-acid sequence, 324 residues long: METEEEMKESSISMVEAKLPPGFRFHPKDDELVCDYLMRRSLHNNHRPPLVLIQVDLNKCEPWDIPKMACVGGKDWYFYSQRDRKYATGLRTNRATATGYWKATGKDRTILRKGKLVGMRKTLVFYQGRAPRGRKTDWVMHEFRLQGSHHPPNHSLSSPKEDWVLCRVFHKNTEGVICRDNMGSCFDETASASLPPLMDPYINFDQEPSSYLSDDHHYIINEHVPCFSNLSQNQTLNSNLTNSVSELKIPCKNPNPLFTGGSASATLTGLDSFCSSDQMVLRALLSQLTKIDGSLGPKESQSYGEGSSESLLTDIGIPSTVWNC.

The NAC domain maps to Leu19 to Lys171. The Bipartite nuclear localization signal motif lies at Arg120–Asp137.

Dimer. Interacts with SINAT5. Ubiquitinated. The interaction with SINAT5 mediate its proteasome-dependent degradation. In terms of tissue distribution, predominantly expressed in the root tip and in lateral root initiation sites. Also detected in expanding cotyledon, and in leaf primordia.

Its subcellular location is the nucleus. Its function is as follows. Transcriptional activator that mediates auxin signaling to promote lateral root development. Activates the expression of two downstream auxin-responsive genes, DBP and AIR3. The protein is NAC domain-containing protein 21/22 (NAC021) of Arabidopsis thaliana (Mouse-ear cress).